The following is a 68-amino-acid chain: Guanine nucleotide-binding protein G(I)/G(S)/G(O) subunit gamma-5 (68 aa).

Position 2 is an N-acetylserine (S2). At S2 the chain carries Phosphoserine. Residue C65 is modified to Cysteine methyl ester. C65 carries S-geranylgeranyl cysteine lipidation. Positions S66–L68 are cleaved as a propeptide — removed in mature form.

The protein belongs to the G protein gamma family. G proteins are composed of 3 units, alpha, beta and gamma. In terms of tissue distribution, expressed in a variety of tissues.

Its subcellular location is the cell membrane. In terms of biological role, guanine nucleotide-binding proteins (G proteins) are involved as a modulator or transducer in various transmembrane signaling systems. The beta and gamma chains are required for the GTPase activity, for replacement of GDP by GTP, and for G protein-effector interaction. This chain is Guanine nucleotide-binding protein G(I)/G(S)/G(O) subunit gamma-5 (GNG5), found in Bos taurus (Bovine).